Here is a 154-residue protein sequence, read N- to C-terminus: Insulin-like growth factor 1 (154 aa).

The b stretch occupies residues 50–78; it reads GPETLCGAELVDALQFVCGDRGFYFNKPT. 3 disulfides stabilise this stretch: Cys55–Cys97, Cys67–Cys110, and Cys96–Cys101. The c stretch occupies residues 79-90; sequence GYGSSSRRAPQT. The a stretch occupies residues 91–111; that stretch reads GIVDECCFRSCDLRRLEMYCA. A d region spans residues 112-119; the sequence is PLKPAKSA. Positions 120–154 are cleaved as a propeptide — e peptide; it reads RSVRAQRHTDMPKAQKEVHLKNTSRGSAGNKNYRM. A disordered region spans residues 121–154; it reads SVRAQRHTDMPKAQKEVHLKNTSRGSAGNKNYRM. Positions 126-139 are enriched in basic and acidic residues; sequence RHTDMPKAQKEVHL. Over residues 140–154 the composition is skewed to polar residues; it reads KNTSRGSAGNKNYRM.

It belongs to the insulin family. As to quaternary structure, forms a ternary complex with IGFR1 and ITGAV:ITGB3. Forms a ternary complex with IGFR1 and ITGA6:ITGB4. Forms a ternary complex with IGFBP3 and ALS.

It localises to the secreted. The insulin-like growth factors, isolated from plasma, are structurally and functionally related to insulin but have a much higher growth-promoting activity. May be a physiological regulator of [1-14C]-2-deoxy-D-glucose (2DG) transport and glycogen synthesis in osteoblasts. Stimulates glucose transport in bone-derived osteoblastic (PyMS) cells and is effective at much lower concentrations than insulin, not only regarding glycogen and DNA synthesis but also with regard to enhancing glucose uptake. May play a role in synapse maturation. Ca(2+)-dependent exocytosis of IGF1 is required for sensory perception of smell in the olfactory bulb. Acts as a ligand for IGF1R. Binds to the alpha subunit of IGF1R, leading to the activation of the intrinsic tyrosine kinase activity which autophosphorylates tyrosine residues in the beta subunit thus initiating a cascade of down-stream signaling events leading to activation of the PI3K-AKT/PKB and the Ras-MAPK pathways. Binds to integrins ITGAV:ITGB3 and ITGA6:ITGB4. Its binding to integrins and subsequent ternary complex formation with integrins and IGFR1 are essential for IGF1 signaling. Induces the phosphorylation and activation of IGFR1, MAPK3/ERK1, MAPK1/ERK2 and AKT1. As part of the MAPK/ERK signaling pathway, acts as a negative regulator of apoptosis in cardiomyocytes via promotion of STUB1/CHIP-mediated ubiquitination and degradation of ICER-type isoforms of CREM. In Bos taurus (Bovine), this protein is Insulin-like growth factor 1.